The sequence spans 160 residues: NADH-quinone oxidoreductase subunit B (160 aa).

[4Fe-4S] cluster is bound by residues Cys-37, Cys-38, Cys-102, and Cys-132.

Belongs to the complex I 20 kDa subunit family. In terms of assembly, NDH-1 is composed of 14 different subunits. Subunits NuoB, C, D, E, F, and G constitute the peripheral sector of the complex. [4Fe-4S] cluster is required as a cofactor.

The protein localises to the cell inner membrane. It catalyses the reaction a quinone + NADH + 5 H(+)(in) = a quinol + NAD(+) + 4 H(+)(out). NDH-1 shuttles electrons from NADH, via FMN and iron-sulfur (Fe-S) centers, to quinones in the respiratory chain. Couples the redox reaction to proton translocation (for every two electrons transferred, four hydrogen ions are translocated across the cytoplasmic membrane), and thus conserves the redox energy in a proton gradient. This is NADH-quinone oxidoreductase subunit B from Neisseria meningitidis serogroup A / serotype 4A (strain DSM 15465 / Z2491).